Here is a 180-residue protein sequence, read N- to C-terminus: Adenine phosphoribosyltransferase (180 aa).

This sequence belongs to the purine/pyrimidine phosphoribosyltransferase family. In terms of assembly, homodimer.

Its subcellular location is the cytoplasm. It carries out the reaction AMP + diphosphate = 5-phospho-alpha-D-ribose 1-diphosphate + adenine. The protein operates within purine metabolism; AMP biosynthesis via salvage pathway; AMP from adenine: step 1/1. In terms of biological role, catalyzes a salvage reaction resulting in the formation of AMP, that is energically less costly than de novo synthesis. The polypeptide is Adenine phosphoribosyltransferase (Haemophilus influenzae (strain 86-028NP)).